Reading from the N-terminus, the 131-residue chain is Small ribosomal subunit protein uS12 (131 aa).

Asp-89 is subject to 3-methylthioaspartic acid. The interval 106-131 (GVDGRKQGRSKYGAKKAKVAKTASAK) is disordered. The segment covering 112 to 124 (QGRSKYGAKKAKV) has biased composition (basic residues).

The protein belongs to the universal ribosomal protein uS12 family. In terms of assembly, part of the 30S ribosomal subunit. Contacts proteins S8 and S17. May interact with IF1 in the 30S initiation complex.

Its function is as follows. With S4 and S5 plays an important role in translational accuracy. In terms of biological role, interacts with and stabilizes bases of the 16S rRNA that are involved in tRNA selection in the A site and with the mRNA backbone. Located at the interface of the 30S and 50S subunits, it traverses the body of the 30S subunit contacting proteins on the other side and probably holding the rRNA structure together. The combined cluster of proteins S8, S12 and S17 appears to hold together the shoulder and platform of the 30S subunit. The protein is Small ribosomal subunit protein uS12 of Endomicrobium trichonymphae.